A 208-amino-acid chain; its full sequence is Glutathione S-transferase 1-1 (208 aa).

The 80-residue stretch at M1–D80 folds into the GST N-terminal domain. Residues S9, H50–I52, and E64–R66 each bind glutathione. The region spanning C86–F207 is the GST C-terminal domain.

The protein belongs to the GST superfamily. Theta family. Homodimer.

The enzyme catalyses RX + glutathione = an S-substituted glutathione + a halide anion + H(+). Its function is as follows. Conjugation of reduced glutathione to a wide number of exogenous and endogenous hydrophobic electrophiles. This is Glutathione S-transferase 1-1 (GST1) from Lucilia cuprina (Green bottle fly).